Consider the following 360-residue polypeptide: Olfactory receptor 1L1 (360 aa).

Topologically, residues 1 to 75 (MERNHNPDNC…GLSSRPEDQK (75 aa)) are extracellular. Asn-55 is a glycosylation site (N-linked (GlcNAc...) asparagine). The helical transmembrane segment at 76-99 (PLFAVFLPIYLITVIGNLLIILAI) threads the bilayer. Over 100-107 (RSDTRLQT) the chain is Cytoplasmic. The chain crosses the membrane as a helical span at residues 108-129 (PMYFFLSILSFVDICYVTVIIP). The Extracellular portion of the chain corresponds to 130 to 150 (KMLVNFLSETKTISYSECLTQ). An intrachain disulfide couples Cys-147 to Cys-239. A helical transmembrane segment spans residues 151–170 (MYFFLAFGNTDSYLLAAMAI). Residues 171 to 189 (DRYVAICNPFHYITIMSHR) lie on the Cytoplasmic side of the membrane. A helical membrane pass occupies residues 190–208 (CCVLLLVLSFCIPHFHSLL). The Extracellular portion of the chain corresponds to 209-246 (HILLTNQLIFCASNVIHHFFCDDQPVLKLSCSSHFVKE). Residues 247–269 (ITVMTEGLAVIMTPFSCIIISYL) form a helical membrane-spanning segment. Over 270-286 (RILITVLKIPSAAGKRK) the chain is Cytoplasmic. Residues 287–309 (AFSTCGSHLTVVTLFYGSISYLY) form a helical membrane-spanning segment. At 310–321 (FQPLSNYTVKDQ) the chain is on the extracellular side. The N-linked (GlcNAc...) asparagine glycan is linked to Asn-315. The chain crosses the membrane as a helical span at residues 322 to 341 (IATIIYTVLTPMLNPFIYSL). Residues 342–360 (RNKDMKQGLAKLMHRMKCQ) lie on the Cytoplasmic side of the membrane.

This sequence belongs to the G-protein coupled receptor 1 family.

It localises to the cell membrane. Functionally, odorant receptor. The sequence is that of Olfactory receptor 1L1 (OR1L1) from Homo sapiens (Human).